The chain runs to 80 residues: Large ribosomal subunit protein eL13 (80 aa).

Belongs to the eukaryotic ribosomal protein eL13 family.

The sequence is that of Large ribosomal subunit protein eL13 from Aeropyrum pernix (strain ATCC 700893 / DSM 11879 / JCM 9820 / NBRC 100138 / K1).